Here is a 487-residue protein sequence, read N- to C-terminus: 4-alpha-glucanotransferase (487 aa).

The protein belongs to the disproportionating enzyme family.

Its subcellular location is the cytoplasm. The catalysed reaction is Transfers a segment of a (1-&gt;4)-alpha-D-glucan to a new position in an acceptor, which may be glucose or a (1-&gt;4)-alpha-D-glucan.. Its function is as follows. Catalyzes a disproportionation reaction in which single or multiple glucose units from oligosaccharides are transferred to the 4-hydroxyl group of acceptor sugars. Glucose, maltose and maltotriose can act as acceptor, whereas of the three only maltotriose can act as donor. The polypeptide is 4-alpha-glucanotransferase (malQ) (Clostridium butyricum).